Here is a 219-residue protein sequence, read N- to C-terminus: Vacuolar protein sorting-associated protein 20 homolog 1 (219 aa).

The stretch at 20 to 60 (SLKTQRRKLGQYQQKLEKVIEAEKQAARDLIREKRKDRALL) forms a coiled coil. The segment at 171-219 (PEVPTKESEESEKLDLPDVPTKTPVASNAEITPAESATKTKVLEEPLPA) is disordered. Positions 174–186 (PTKESEESEKLDL) are enriched in basic and acidic residues. The segment covering 194 to 209 (PVASNAEITPAESATK) has biased composition (polar residues).

The protein belongs to the SNF7 family. As to quaternary structure, component of the endosomal sorting required for transport complex III (ESCRT-III), composed at least of VPS2, VPS20, VPS24 and VPS32. Interacts with SKD1.

It localises to the endosome. Its function is as follows. Component of the ESCRT-III complex, which is required for multivesicular bodies (MVBs) formation and sorting of endosomal cargo proteins into MVBs. The ESCRT-III complex is probably involved in the concentration of MVB cargo. The sequence is that of Vacuolar protein sorting-associated protein 20 homolog 1 (VPS20.1) from Arabidopsis thaliana (Mouse-ear cress).